The chain runs to 554 residues: Phenylalanine--tRNA ligase beta subunit (554 aa).

Residues 276–351 enclose the B5 domain; sequence LTPRYREISI…KNHGYEKFEG (76 aa). The Mg(2+) site is built by D329, D335, E338, and E339.

Belongs to the phenylalanyl-tRNA synthetase beta subunit family. Type 2 subfamily. Tetramer of two alpha and two beta subunits. The cofactor is Mg(2+).

It is found in the cytoplasm. It catalyses the reaction tRNA(Phe) + L-phenylalanine + ATP = L-phenylalanyl-tRNA(Phe) + AMP + diphosphate + H(+). The protein is Phenylalanine--tRNA ligase beta subunit of Methanococcus vannielii (strain ATCC 35089 / DSM 1224 / JCM 13029 / OCM 148 / SB).